The following is a 289-amino-acid chain: uncharacterized protein (289 aa).

The segment covering 80–96 (PLNESRTSFKNIPQSRN) has biased composition (polar residues). Disordered stretches follow at residues 80–101 (PLNESRTSFKNIPQSRNLPRDY) and 136–157 (PRENFRNDTDIPKDPLRDRMRE).

This is an uncharacterized protein from Acanthamoeba polyphaga (Amoeba).